Reading from the N-terminus, the 59-residue chain is uncharacterized protein (59 aa).

33 to 40 (GRRRVGKT) is an ATP binding site.

This is an uncharacterized protein from Methanocaldococcus jannaschii (strain ATCC 43067 / DSM 2661 / JAL-1 / JCM 10045 / NBRC 100440) (Methanococcus jannaschii).